Reading from the N-terminus, the 64-residue chain is Small ribosomal subunit protein bS21 (64 aa).

Belongs to the bacterial ribosomal protein bS21 family.

This chain is Small ribosomal subunit protein bS21, found in Karelsulcia muelleri (strain GWSS) (Sulcia muelleri).